The primary structure comprises 209 residues: Kynurenine formamidase (209 aa).

W18 contributes to the substrate binding site. H48, H52, and D54 together coordinate Zn(2+). H58 functions as the Proton donor/acceptor in the catalytic mechanism. The Zn(2+) site is built by H160 and E172.

Belongs to the Cyclase 1 superfamily. KynB family. Homodimer. Zn(2+) is required as a cofactor.

The catalysed reaction is N-formyl-L-kynurenine + H2O = L-kynurenine + formate + H(+). It functions in the pathway amino-acid degradation; L-tryptophan degradation via kynurenine pathway; L-kynurenine from L-tryptophan: step 2/2. Catalyzes the hydrolysis of N-formyl-L-kynurenine to L-kynurenine, the second step in the kynurenine pathway of tryptophan degradation. In Maricaulis maris (strain MCS10) (Caulobacter maris), this protein is Kynurenine formamidase.